The chain runs to 224 residues: Synaptogyrin-2 (224 aa).

M1 carries the N-acetylmethionine modification. Phosphoserine is present on S3. The region spanning 20–171 is the MARVEL domain; that stretch reads FLKQPQVVVR…LAFLAYQRYK (152 aa). 4 consecutive transmembrane segments (helical) span residues 26–46, 73–93, 105–125, and 147–167; these read VVVR…IFGE, AIGV…IYFP, VIGD…GFCF, and AAIT…FLAY. Residues 196-224 form a disordered region; that stretch reads PGVPADTYQQPPFTQNAESTEGYQPPPVY. A compositionally biased stretch (polar residues) spans 202–217; that stretch reads TYQQPPFTQNAESTEG.

The protein belongs to the synaptogyrin family. Post-translationally, may be tyrosine phosphorylated by Src.

The protein localises to the cytoplasmic vesicle membrane. It is found in the cytoplasmic vesicle. Its subcellular location is the secretory vesicle. It localises to the synaptic vesicle membrane. Functionally, may play a role in regulated exocytosis. In neuronal cells, modulates the localization of synaptophysin/SYP into synaptic-like microvesicles and may therefore play a role in the formation and/or the maturation of this vesicles. May also play a role in GLUT4 storage and transport to the plasma membrane. The chain is Synaptogyrin-2 from Bos taurus (Bovine).